Here is a 247-residue protein sequence, read N- to C-terminus: RNA polymerase sigma factor FliA (247 aa).

Residues 22–94 (LIQRYAPLVK…MLDEVRKGDW (73 aa)) are sigma-70 factor domain-2. Residues 49–52 (DLMQ) carry the Interaction with polymerase core subunit RpoC motif. The segment at 102-171 (NTRMVTDAIR…GLPEDTSLSH (70 aa)) is sigma-70 factor domain-3. Residues 190–238 (AIAKLPERERLVLALYYDEELNLKEIGEVLGVSESRVSQLHSQCAARLR) are sigma-70 factor domain-4. A DNA-binding region (H-T-H motif) is located at residues 212 to 231 (LKEIGEVLGVSESRVSQLHS).

The protein belongs to the sigma-70 factor family. FliA subfamily.

The protein resides in the cytoplasm. Sigma factors are initiation factors that promote the attachment of RNA polymerase to specific initiation sites and are then released. This sigma factor controls the expression of flagella-related genes. Required for the flagellin gene (fliC) expression. The polypeptide is RNA polymerase sigma factor FliA (Pseudomonas aeruginosa (strain ATCC 15692 / DSM 22644 / CIP 104116 / JCM 14847 / LMG 12228 / 1C / PRS 101 / PAO1)).